A 199-amino-acid chain; its full sequence is Protein GrpE (199 aa).

Residues 20 to 52 (YKVENEILEEETDEESQHQEPALGHPSYTALEE) form a disordered region.

The protein belongs to the GrpE family. As to quaternary structure, homodimer.

Its subcellular location is the cytoplasm. In terms of biological role, participates actively in the response to hyperosmotic and heat shock by preventing the aggregation of stress-denatured proteins, in association with DnaK and GrpE. It is the nucleotide exchange factor for DnaK and may function as a thermosensor. Unfolded proteins bind initially to DnaJ; upon interaction with the DnaJ-bound protein, DnaK hydrolyzes its bound ATP, resulting in the formation of a stable complex. GrpE releases ADP from DnaK; ATP binding to DnaK triggers the release of the substrate protein, thus completing the reaction cycle. Several rounds of ATP-dependent interactions between DnaJ, DnaK and GrpE are required for fully efficient folding. This chain is Protein GrpE, found in Legionella pneumophila (strain Corby).